We begin with the raw amino-acid sequence, 383 residues long: Vesicle-associated membrane protein-associated protein scs2 (383 aa).

The MSP domain occupies 1–123 (MSVECSGELF…SIFDRKIRCV (123 aa)). The Cytoplasmic segment spans residues 1 to 362 (MSVECSGELF…TGASLTESPG (362 aa)). Residues 127-146 (KQPPQSADKQVENTSTSNPP) show a composition bias toward polar residues. Disordered stretches follow at residues 127–160 (KQPPQSADKQVENTSTSNPPVSVEGSENLASSVG) and 233–359 (ESAS…SLTE). Ser-236, Ser-237, Ser-259, Ser-261, and Ser-268 each carry phosphoserine. The segment covering 241 to 263 (DVARSKVQDIIDNEIPKPSESPR) has biased composition (basic and acidic residues). A compositionally biased stretch (basic and acidic residues) spans 289–300 (FDTKKNDFDSKL). Residues 347 to 359 (ADPSSSTGASLTE) show a composition bias toward polar residues. Residues 363 to 383 (IPPNIVIILCLIFFLIGYLFF) form a helical; Anchor for type IV membrane protein membrane-spanning segment.

Belongs to the VAMP-associated protein (VAP) (TC 9.B.17) family. In terms of assembly, interacts (via MSP domain) with duc1 (via FFAT-motif); the interaction is direct and serves to restrict the localization of duc1 to areas of cell membrane-endoplasmic reticulum contact sites, and away from the cell division site. Interacts with epr1.

It is found in the endoplasmic reticulum membrane. Its function is as follows. Vesicle-associated membrane protein-associated protein (VAP) implicated in maintaining the cortical endoplasmic reticulum (ER)-plasma membrane (PM) attachment. ER-PM contacts function to modulate the distribution of contractile ring components to ensure robust ring assembly. ER-PM contacts function also in controlling exocytosis and maintenance of cell polarity regulating cell shape. VAPs play an important role in regulating eisosome assembly. VAPs also contribute to ER-phagy by tethering atg8 to the ER membrane, but also by maintaining the ER-plasma membrane contact. Restricts the localization of duc1 away from the site of cell division. The protein is Vesicle-associated membrane protein-associated protein scs2 (scs2) of Schizosaccharomyces pombe (strain 972 / ATCC 24843) (Fission yeast).